The following is a 167-amino-acid chain: Chorion class CB protein PC404 (167 aa).

Positions 1-55 (IGREAIVGAGLQGPFGGPWPYDALSPFDMPYGPALPAMSCGAGSFGPSSGFAPAA) are left arm. The interval 56–126 (AYGGGLAVTS…GDGAVGIVAE (71 aa)) is central domain. Residues 127–167 (TPFASTSVNPAYGYGGAIGGGVPYNSYGPIGYGGCGYNALY) form a right arm region.

Belongs to the chorion protein family.

This protein is one of many from the eggshell of the silk moth. The chain is Chorion class CB protein PC404 from Antheraea polyphemus (Polyphemus moth).